Here is a 105-residue protein sequence, read N- to C-terminus: Met repressor (105 aa).

Belongs to the MetJ family. In terms of assembly, homodimer.

The protein resides in the cytoplasm. Its function is as follows. This regulatory protein, when combined with SAM (S-adenosylmethionine) represses the expression of the methionine regulon and of enzymes involved in SAM synthesis. This is Met repressor from Pectobacterium carotovorum subsp. carotovorum (strain PC1).